Here is a 328-residue protein sequence, read N- to C-terminus: Cell division protein ZipA (328 aa).

Topologically, residues 1–6 (MMQDLR) are periplasmic. A helical membrane pass occupies residues 7–27 (LILIVVGAIAIIALLLHGLWT). The Cytoplasmic portion of the chain corresponds to 28 to 328 (SRKERSSLFR…REVLDANTIA (301 aa)). Basic and acidic residues predominate over residues 61–72 (GEVRVRTSHPQE). The segment at 61 to 183 (GEVRVRTSHP…EPVAPAPEAK (123 aa)) is disordered. 2 stretches are compositionally biased toward polar residues: residues 95 to 104 (KSAQVKTASR) and 164 to 174 (APQQHVESQQE).

Belongs to the ZipA family. Interacts with FtsZ via their C-terminal domains.

The protein localises to the cell inner membrane. Essential cell division protein that stabilizes the FtsZ protofilaments by cross-linking them and that serves as a cytoplasmic membrane anchor for the Z ring. Also required for the recruitment to the septal ring of downstream cell division proteins. This chain is Cell division protein ZipA, found in Yersinia pestis bv. Antiqua (strain Antiqua).